We begin with the raw amino-acid sequence, 115 residues long: NADH-ubiquinone oxidoreductase chain 3 (115 aa).

The next 3 membrane-spanning stretches (helical) occupy residues 4–24 (LTAL…AFWL), 55–75 (FFLV…LLPL), and 87–107 (MMLT…YEWM).

This sequence belongs to the complex I subunit 3 family. As to quaternary structure, core subunit of respiratory chain NADH dehydrogenase (Complex I) which is composed of 45 different subunits. Interacts with TMEM186. Interacts with TMEM242.

Its subcellular location is the mitochondrion inner membrane. It catalyses the reaction a ubiquinone + NADH + 5 H(+)(in) = a ubiquinol + NAD(+) + 4 H(+)(out). Functionally, core subunit of the mitochondrial membrane respiratory chain NADH dehydrogenase (Complex I) which catalyzes electron transfer from NADH through the respiratory chain, using ubiquinone as an electron acceptor. Essential for the catalytic activity of complex I. The protein is NADH-ubiquinone oxidoreductase chain 3 of Peromyscus boylii (Brush deermouse).